The sequence spans 225 residues: NAD(P)H-quinone oxidoreductase subunit K, chloroplastic (225 aa).

C43, C44, C108, and C139 together coordinate [4Fe-4S] cluster.

This sequence belongs to the complex I 20 kDa subunit family. NDH is composed of at least 16 different subunits, 5 of which are encoded in the nucleus. [4Fe-4S] cluster serves as cofactor.

The protein resides in the plastid. It localises to the chloroplast thylakoid membrane. It carries out the reaction a plastoquinone + NADH + (n+1) H(+)(in) = a plastoquinol + NAD(+) + n H(+)(out). It catalyses the reaction a plastoquinone + NADPH + (n+1) H(+)(in) = a plastoquinol + NADP(+) + n H(+)(out). In terms of biological role, NDH shuttles electrons from NAD(P)H:plastoquinone, via FMN and iron-sulfur (Fe-S) centers, to quinones in the photosynthetic chain and possibly in a chloroplast respiratory chain. The immediate electron acceptor for the enzyme in this species is believed to be plastoquinone. Couples the redox reaction to proton translocation, and thus conserves the redox energy in a proton gradient. The chain is NAD(P)H-quinone oxidoreductase subunit K, chloroplastic from Eucalyptus globulus subsp. globulus (Tasmanian blue gum).